An 84-amino-acid polypeptide reads, in one-letter code: Cell division topological specificity factor (84 aa).

It belongs to the MinE family.

Prevents the cell division inhibition by proteins MinC and MinD at internal division sites while permitting inhibition at polar sites. This ensures cell division at the proper site by restricting the formation of a division septum at the midpoint of the long axis of the cell. The chain is Cell division topological specificity factor from Hydrogenovibrio crunogenus (strain DSM 25203 / XCL-2) (Thiomicrospira crunogena).